A 162-amino-acid chain; its full sequence is Caveolin-2 (162 aa).

The Cytoplasmic segment spans residues 1-86; that stretch reads MGLETEKADV…FEISKYVMYK (86 aa). Tyr-19 is subject to Phosphotyrosine; by SRC. 2 positions are modified to phosphoserine: Ser-20 and Ser-23. Tyr-27 carries the post-translational modification Phosphotyrosine; by SRC. At Ser-36 the chain carries Phosphoserine. Positions 87-107 form an intramembrane region, helical; the sequence is FLTVFLAIPLAFLAGILFATL. At 108 to 162 the chain is on the cytoplasmic side; it reads SCLHIWIIMPFVKTCLMVLPSVQTIWKSVTDAIIAPLCTSIGRSFSSVSLQLSQD.

This sequence belongs to the caveolin family. In terms of assembly, monomer or homodimer. Interacts with CAV1; the interaction forms a stable heterooligomeric complex that is required for targeting to lipid rafts and for caveolae formation. Tyrosine phosphorylated forms do not form heterooligomers with the Tyr-19-phosphorylated form existing as a monomer or dimer, and the Tyr-27-form as a monomer only. Interacts (tyrosine phosphorylated form) with the SH2 domain-containing proteins, RASA1, NCK1 and SRC. Interacts (tyrosine phosphorylated form) with INSR, the interaction (Tyr-27-phosphorylated form) is increased on insulin stimulation. Interacts (Tyr-19 phosphorylated form) with MAPK1 (phosphorylated form); the interaction, promoted by insulin, leads to nuclear location and MAPK1 activation. Interacts with STAT3; the interaction is increased on insulin-induced tyrosine phosphorylation leading to STAT activation. Phosphorylated on serine and tyrosine residues. CAV1 promotes phosphorylation on Ser-23 which then targets the complex to the plasma membrane, lipid rafts and caveolae. Phosphorylation on Ser-36 appears to modulate mitosis in endothelial cells. Phosphorylation on both Tyr-19 and Tyr-27 is required for insulin-induced 'Ser-727' phosphorylation of STAT3 and its activation. Phosphorylation on Tyr-19 is required for insulin-induced phosphorylation of MAPK1 and DNA binding of STAT3. Tyrosine phosphorylation is induced by both EGF and insulin (By. similarity).

The protein resides in the nucleus. It is found in the cytoplasm. Its subcellular location is the golgi apparatus membrane. It localises to the cell membrane. The protein localises to the membrane. The protein resides in the caveola. May act as a scaffolding protein within caveolar membranes. Interacts directly with G-protein alpha subunits and can functionally regulate their activity. Acts as an accessory protein in conjunction with CAV1 in targeting to lipid rafts and driving caveolae formation. The Ser-36 phosphorylated form has a role in modulating mitosis in endothelial cells. Positive regulator of cellular mitogenesis of the MAPK signaling pathway. Required for the insulin-stimulated nuclear translocation and activation of MAPK1 and STAT3, and the subsequent regulation of cell cycle progression. The sequence is that of Caveolin-2 (CAV2) from Plecturocebus moloch (Dusky titi monkey).